Reading from the N-terminus, the 379-residue chain is Putative F-box protein At2g33190 (379 aa).

The F-box domain maps to Asn6–Val53.

This chain is Putative F-box protein At2g33190, found in Arabidopsis thaliana (Mouse-ear cress).